We begin with the raw amino-acid sequence, 436 residues long: Trigger factor (436 aa).

The 86-residue stretch at 163–248 (GDRVVLDFAG…VKEVAEGVLP (86 aa)) folds into the PPIase FKBP-type domain.

The protein belongs to the FKBP-type PPIase family. Tig subfamily.

The protein resides in the cytoplasm. The catalysed reaction is [protein]-peptidylproline (omega=180) = [protein]-peptidylproline (omega=0). Its function is as follows. Involved in protein export. Acts as a chaperone by maintaining the newly synthesized protein in an open conformation. Functions as a peptidyl-prolyl cis-trans isomerase. This is Trigger factor from Bordetella bronchiseptica (strain ATCC BAA-588 / NCTC 13252 / RB50) (Alcaligenes bronchisepticus).